The primary structure comprises 550 residues: Dihydroxy-acid dehydratase (550 aa).

Residue aspartate 78 coordinates Mg(2+). Cysteine 119 lines the [2Fe-2S] cluster pocket. Aspartate 120 and lysine 121 together coordinate Mg(2+). The residue at position 121 (lysine 121) is an N6-carboxylysine. Residue cysteine 191 participates in [2Fe-2S] cluster binding. A Mg(2+)-binding site is contributed by glutamate 440. The active-site Proton acceptor is the serine 466.

It belongs to the IlvD/Edd family. Homodimer. [2Fe-2S] cluster serves as cofactor. It depends on Mg(2+) as a cofactor.

It carries out the reaction (2R)-2,3-dihydroxy-3-methylbutanoate = 3-methyl-2-oxobutanoate + H2O. The catalysed reaction is (2R,3R)-2,3-dihydroxy-3-methylpentanoate = (S)-3-methyl-2-oxopentanoate + H2O. The protein operates within amino-acid biosynthesis; L-isoleucine biosynthesis; L-isoleucine from 2-oxobutanoate: step 3/4. Its pathway is amino-acid biosynthesis; L-valine biosynthesis; L-valine from pyruvate: step 3/4. Functions in the biosynthesis of branched-chain amino acids. Catalyzes the dehydration of (2R,3R)-2,3-dihydroxy-3-methylpentanoate (2,3-dihydroxy-3-methylvalerate) into 2-oxo-3-methylpentanoate (2-oxo-3-methylvalerate) and of (2R)-2,3-dihydroxy-3-methylbutanoate (2,3-dihydroxyisovalerate) into 2-oxo-3-methylbutanoate (2-oxoisovalerate), the penultimate precursor to L-isoleucine and L-valine, respectively. The polypeptide is Dihydroxy-acid dehydratase (Methanococcus aeolicus (strain ATCC BAA-1280 / DSM 17508 / OCM 812 / Nankai-3)).